A 210-amino-acid chain; its full sequence is Cell division protein FtsQ (210 aa).

In terms of domain architecture, POTRA spans 1 to 58 (LQTSEIEVFQLLGLDGSTSLIALDIDAARRKLVQLPWVEDVDIRKVYPKTVEVRLKER). A helical membrane pass occupies residues 8–25 (VFQLLGLDGSTSLIALDI).

Belongs to the FtsQ/DivIB family. FtsQ subfamily.

The protein localises to the cell inner membrane. Functionally, essential cell division protein. This Rhizobium radiobacter (Agrobacterium tumefaciens) protein is Cell division protein FtsQ.